We begin with the raw amino-acid sequence, 239 residues long: Protein GrpE (239 aa).

Disordered regions lie at residues Met1 to Ile56 and Ser208 to Val239. The segment covering Thr40 to Lys53 has biased composition (basic and acidic residues). Acidic residues predominate over residues Thr224–Val239.

It belongs to the GrpE family. Homodimer.

Its subcellular location is the cytoplasm. Functionally, participates actively in the response to hyperosmotic and heat shock by preventing the aggregation of stress-denatured proteins, in association with DnaK and GrpE. It is the nucleotide exchange factor for DnaK and may function as a thermosensor. Unfolded proteins bind initially to DnaJ; upon interaction with the DnaJ-bound protein, DnaK hydrolyzes its bound ATP, resulting in the formation of a stable complex. GrpE releases ADP from DnaK; ATP binding to DnaK triggers the release of the substrate protein, thus completing the reaction cycle. Several rounds of ATP-dependent interactions between DnaJ, DnaK and GrpE are required for fully efficient folding. The chain is Protein GrpE from Prochlorococcus marinus (strain MIT 9215).